A 200-amino-acid polypeptide reads, in one-letter code: Recombination protein RecR (200 aa).

The C4-type zinc finger occupies 60–75 (CVYCQALTEDDVCNIC). Positions 83 to 177 (TKLCIIESML…KISRIGFGVP (95 aa)) constitute a Toprim domain.

This sequence belongs to the RecR family.

Its function is as follows. May play a role in DNA repair. It seems to be involved in an RecBC-independent recombinational process of DNA repair. It may act with RecF and RecO. This chain is Recombination protein RecR, found in Francisella tularensis subsp. holarctica (strain OSU18).